Here is a 356-residue protein sequence, read N- to C-terminus: Arginine kinase (356 aa).

Residues 9–91 enclose the Phosphagen kinase N-terminal domain; sequence KLEAGFQKLQ…FDPIIEDYHI (83 aa). Residue 64–68 coordinates L-arginine; sequence GVGIY. One can recognise a Phosphagen kinase C-terminal domain in the interval 119–356; the sequence is FVISTRVRCG…AELIKLEQSA (238 aa). Residues 122–126 and histidine 185 each bind ATP; that span reads STRVR. Position 225 (glutamate 225) interacts with L-arginine. Arginine 229 is an ATP binding site. Residue cysteine 271 participates in L-arginine binding. ATP is bound by residues 280–284 and 309–314; these read RASVH and RGTRGE. Glutamate 314 contributes to the L-arginine binding site.

The protein belongs to the ATP:guanido phosphotransferase family.

The enzyme catalyses L-arginine + ATP = N(omega)-phospho-L-arginine + ADP + H(+). This Artemia franciscana (Brine shrimp) protein is Arginine kinase (ARGK).